Here is a 116-residue protein sequence, read N- to C-terminus: UPF0122 protein CA_C1753 (116 aa).

This sequence belongs to the UPF0122 family.

Might take part in the signal recognition particle (SRP) pathway. This is inferred from the conservation of its genetic proximity to ftsY/ffh. May be a regulatory protein. This chain is UPF0122 protein CA_C1753, found in Clostridium acetobutylicum (strain ATCC 824 / DSM 792 / JCM 1419 / IAM 19013 / LMG 5710 / NBRC 13948 / NRRL B-527 / VKM B-1787 / 2291 / W).